A 366-amino-acid chain; its full sequence is Anhydro-N-acetylmuramic acid kinase (366 aa).

10–17 contacts ATP; the sequence is GTSMDGID.

The protein belongs to the anhydro-N-acetylmuramic acid kinase family.

The catalysed reaction is 1,6-anhydro-N-acetyl-beta-muramate + ATP + H2O = N-acetyl-D-muramate 6-phosphate + ADP + H(+). It participates in amino-sugar metabolism; 1,6-anhydro-N-acetylmuramate degradation. It functions in the pathway cell wall biogenesis; peptidoglycan recycling. In terms of biological role, catalyzes the specific phosphorylation of 1,6-anhydro-N-acetylmuramic acid (anhMurNAc) with the simultaneous cleavage of the 1,6-anhydro ring, generating MurNAc-6-P. Is required for the utilization of anhMurNAc either imported from the medium or derived from its own cell wall murein, and thus plays a role in cell wall recycling. The protein is Anhydro-N-acetylmuramic acid kinase of Legionella pneumophila subsp. pneumophila (strain Philadelphia 1 / ATCC 33152 / DSM 7513).